We begin with the raw amino-acid sequence, 346 residues long: Enkurin domain-containing protein 1 (346 aa).

3 disordered regions span residues 1–24 (MCEG…DYYR), 88–107 (SGVS…NLRR), and 113–132 (RRFQ…PLKA). The residue at position 91 (serine 91) is a Phosphoserine. Basic and acidic residues-rich tracts occupy residues 98 to 107 (KDHEKENLRR) and 113 to 125 (RRFQ…REQG). The residue at position 136 (serine 136) is a Phosphoserine. Residues 251 to 343 (ERRDLWRKEA…IFSRPKVFVK (93 aa)) form the Enkurin domain. The tract at residues 259 to 280 (EAEARQRSQPDPSMPPGHTLMP) is disordered.

As to quaternary structure, interacts with alpha-tubulin. Interacts (via central region) with CCP110 (via N-terminal region); competes with CEP97 for binding to CCP110. In terms of tissue distribution, widely expressed with highest levels in testis and lung.

It is found in the cytoplasm. It localises to the cytoskeleton. The protein localises to the microtubule organizing center. The protein resides in the centrosome. Its subcellular location is the centriole. It is found in the cilium basal body. It localises to the cell projection. The protein localises to the cilium. The protein resides in the spindle. Its subcellular location is the spindle pole. It is found in the cilium axoneme. Functionally, microtubule-binding protein which regulates microtubule organization and stability. Promotes the stability of astral microtubules and facilitates the proper orientation of the mitotic spindle. This allows the oriented division of basal keratinocytes and contributes to epidermal stratification. Required for the assembly of both primary and motile cilia. Destabilizes the interaction between CCP110 and CEP97 by competing with CEP97 for binding to CCP110 which promotes the removal of CCP110 and CEP97 from the mother centriole and allows the initiation of ciliogenesis. The protein is Enkurin domain-containing protein 1 (Enkd1) of Mus musculus (Mouse).